The primary structure comprises 486 residues: Galactose-1-phosphate uridylyltransferase (486 aa).

The protein belongs to the galactose-1-phosphate uridylyltransferase type 2 family.

Its subcellular location is the cytoplasm. It catalyses the reaction alpha-D-galactose 1-phosphate + UDP-alpha-D-glucose = alpha-D-glucose 1-phosphate + UDP-alpha-D-galactose. The protein operates within carbohydrate metabolism; galactose metabolism. This Lacticaseibacillus casei (Lactobacillus casei) protein is Galactose-1-phosphate uridylyltransferase.